The primary structure comprises 335 residues: Cytoplasmic envelopment protein 2 (335 aa).

The protein belongs to the herpesviridae cytoplasmic envelopment protein 2 family. Interacts with cytoplasmic envelopment protein 3 and with the capsid.

The protein resides in the virion tegument. It is found in the host cytoplasm. Its subcellular location is the host nucleus. Plays a critical role in cytoplasmic virus egress. Participates in the final step of tegumentation and envelope acquisition within the host cytoplasm by directly interacting with the capsid. Upon virion binding to target cell, a signaling cascade is triggered to disrupt the interaction with the capsid, thereby preparing capsid uncoating. The chain is Cytoplasmic envelopment protein 2 (U65) from Human herpesvirus 6B (strain Z29) (HHV-6 variant B).